A 200-amino-acid polypeptide reads, in one-letter code: MERFGGAGYEVAAAELSRQQERHYRLLSELQELVKALPSSCQQRLSYTTLSDLALALLDGTVFEIVQGLLEIQHLTEKNLYSQRLKLHSEHRGLKQELFHRHKEAQQCCRPHNLPLLRAAQQREMEAVEQRIREEQRMMDEKIVLELDQKVIDQQSTLEKAGVSGFYITTNPQELTLQMNLLELIRKLQQKESESEKAFS.

Coiled-coil stretches lie at residues 116 to 146 (LLRA…IVLE) and 176 to 198 (TLQM…SEKA).

The protein belongs to the gonadal family.

This chain is Protein DGCR6 (DGCR6), found in Gallus gallus (Chicken).